The sequence spans 210 residues: ATP-dependent Clp protease proteolytic subunit (210 aa).

The Nucleophile role is filled by S107. H132 is an active-site residue.

The protein belongs to the peptidase S14 family. As to quaternary structure, fourteen ClpP subunits assemble into 2 heptameric rings which stack back to back to give a disk-like structure with a central cavity, resembling the structure of eukaryotic proteasomes.

It localises to the cytoplasm. It carries out the reaction Hydrolysis of proteins to small peptides in the presence of ATP and magnesium. alpha-casein is the usual test substrate. In the absence of ATP, only oligopeptides shorter than five residues are hydrolyzed (such as succinyl-Leu-Tyr-|-NHMec, and Leu-Tyr-Leu-|-Tyr-Trp, in which cleavage of the -Tyr-|-Leu- and -Tyr-|-Trp bonds also occurs).. Cleaves peptides in various proteins in a process that requires ATP hydrolysis. Has a chymotrypsin-like activity. Plays a major role in the degradation of misfolded proteins. This Zymomonas mobilis subsp. mobilis (strain ATCC 31821 / ZM4 / CP4) protein is ATP-dependent Clp protease proteolytic subunit.